Reading from the N-terminus, the 198-residue chain is Molybdopterin synthase catalytic subunit (198 aa).

Substrate-binding positions include H107–R108, K123, and K130–E132.

The protein belongs to the MoaE family. MOCS2B subfamily. Heterotetramer; composed of 2 small (MOCS2A) and 2 large (MOCS2B) subunits.

The protein resides in the cytoplasm. The enzyme catalyses 2 [molybdopterin-synthase sulfur-carrier protein]-C-terminal-Gly-aminoethanethioate + cyclic pyranopterin phosphate + H2O = molybdopterin + 2 [molybdopterin-synthase sulfur-carrier protein]-C-terminal Gly-Gly + 2 H(+). It functions in the pathway cofactor biosynthesis; molybdopterin biosynthesis. Catalytic subunit of the molybdopterin synthase complex, a complex that catalyzes the conversion of precursor Z into molybdopterin. Acts by mediating the incorporation of 2 sulfur atoms from thiocarboxylated MOCS2A into precursor Z to generate a dithiolene group. The polypeptide is Molybdopterin synthase catalytic subunit (Arabidopsis thaliana (Mouse-ear cress)).